A 446-amino-acid chain; its full sequence is Cytochrome P450 monooxygenase ptmP (446 aa).

The chain crosses the membrane as a helical span at residues Val19–Pro39. A heme-binding site is contributed by Cys385. The N-linked (GlcNAc...) asparagine glycan is linked to Asn430.

The protein belongs to the cytochrome P450 family. Requires heme as cofactor.

It localises to the membrane. Its pathway is secondary metabolite biosynthesis. Cytochrome P450 monooxygenase; part of the gene cluster that mediates the biosynthesis of the indole diterpenes penitrems. The geranylgeranyl diphosphate (GGPP) synthase ptmG catalyzes the first step in penitrem biosynthesis via conversion of farnesyl pyrophosphate and isopentyl pyrophosphate into geranylgeranyl pyrophosphate (GGPP). Condensation of indole-3-glycerol phosphate with GGPP by the prenyl transferase ptmC then forms 3-geranylgeranylindole (3-GGI). Epoxidation by the FAD-dependent monooxygenase ptmM leads to a epoxidized-GGI that is substrate of the terpene cyclase ptmB for cyclization to yield paspaline. Paspaline is subsequently converted to 13-desoxypaxilline by the cytochrome P450 monooxygenase ptmP, the latter being then converted to paxilline by the cytochrome P450 monooxygenase ptmQ. Paxilline is converted to beta-paxitriol via C-10 ketoreduction by the short-chain dehydrogenase ptmH which can be monoprenylated at the C-20 by the indole diterpene prenyltransferase ptmD. A two-step elimination (acetylation and elimination) process performed by the O-acetyltransferase ptmV and ptmI leads to the production of the prenylated form of penijanthine. The FAD-linked oxidoreductase ptmO then converts the prenylated form of penijanthine into PC-M5 which is in turn transformed into PC-M4 by the aromatic dimethylallyltransferase ptmE. Five sequential oxidative transformations performed by the cytochrome P450 monooxygenases ptmK, ptmU, ptmL, ptmN and ptmJ yield the various penitrem compounds. PtmK, ptmU and ptmM are involved in the formation of the key bicyclic ring of penitrem C via the formation of the intermediates secopenitrem D and penitrem D. PtmL catalyzes the epoxidation of penitrem D and C to yield penitrem B and F, respectively. PtmJ catalyzes the last benzylic hydroxylation to convert penitrem B to prenitrem E and penitrem F to penitrem A. This is Cytochrome P450 monooxygenase ptmP from Penicillium ochrochloron.